We begin with the raw amino-acid sequence, 836 residues long: Enhancer of polycomb homolog 1 (836 aa).

A Glycyl lysine isopeptide (Lys-Gly) (interchain with G-Cter in SUMO2) cross-link involves residue K319. Disordered stretches follow at residues 335–360 and 372–401; these read KRKYEKKPKVLPSSAAATPQQTSPAA and YDFPSSDEEPLSQVLSGSSEAEEDNDPDGP. A compositionally biased stretch (low complexity) spans 346–360; that stretch reads PSSAAATPQQTSPAA. S539 carries the phosphoserine modification. K673 is covalently cross-linked (Glycyl lysine isopeptide (Lys-Gly) (interchain with G-Cter in SUMO2)). Positions 802 to 829 are disordered; that stretch reads VPSSSSVDSVPRENHESEKPALNNIADN. A compositionally biased stretch (basic and acidic residues) spans 811–820; sequence VPRENHESEK.

Belongs to the enhancer of polycomb family. In terms of assembly, component of the NuA4 histone acetyltransferase complex which contains the catalytic subunit KAT5/TIP60 and the subunits EP400, TRRAP/PAF400, BRD8/SMAP, EPC1, DMAP1/DNMAP1, RUVBL1/TIP49, RUVBL2, ING3, actin, ACTL6A/BAF53A, MORF4L1/MRG15, MORF4L2/MRGX, MRGBP, YEATS4/GAS41, VPS72/YL1 and MEAF6. KAT5/TIP60, EPC1, and ING3 together constitute a minimal HAT complex termed Piccolo NuA4. Component of a NuA4-related complex which contains EP400, TRRAP/PAF400, SRCAP, BRD8/SMAP, EPC1, DMAP1/DNMAP1, RUVBL1/TIP49, RUVBL2, actin, ACTL6A/BAF53A, VPS72 and YEATS4/GAS41. Interacts with TRIM27. Interacts with MBTD1; interaction is direct and promotes recruitment of MBTD1 into the NuA4 histone acetyltransferase complex.

It is found in the nucleus. The protein resides in the cytoplasm. Its function is as follows. Component of the NuA4 histone acetyltransferase (HAT) complex, a multiprotein complex involved in transcriptional activation of select genes principally by acetylation of nucleosomal histones H4 and H2A. The NuA4 complex plays a direct role in repair of DNA double-strand breaks (DSBs) by promoting homologous recombination (HR). The NuA4 complex is also required for spermatid development by promoting acetylation of histones: histone acetylation is required for histone replacement during the transition from round to elongating spermatids. In the NuA4 complex, EPC1 is required to recruit MBTD1 into the complex. The chain is Enhancer of polycomb homolog 1 from Homo sapiens (Human).